The following is a 406-amino-acid chain: Cysteine desulfurase (406 aa).

K226 is subject to N6-(pyridoxal phosphate)lysine. Residue C364 is the Cysteine persulfide intermediate of the active site.

Belongs to the class-V pyridoxal-phosphate-dependent aminotransferase family. Csd subfamily. As to quaternary structure, homodimer. Interacts with SufE and the SufBCD complex composed of SufB, SufC and SufD. The interaction with SufE is required to mediate the direct transfer of the sulfur atom from the S-sulfanylcysteine. It depends on pyridoxal 5'-phosphate as a cofactor.

The protein localises to the cytoplasm. It carries out the reaction (sulfur carrier)-H + L-cysteine = (sulfur carrier)-SH + L-alanine. It catalyses the reaction L-selenocysteine + AH2 = hydrogenselenide + L-alanine + A + H(+). It participates in cofactor biosynthesis; iron-sulfur cluster biosynthesis. Its function is as follows. Cysteine desulfurases mobilize the sulfur from L-cysteine to yield L-alanine, an essential step in sulfur metabolism for biosynthesis of a variety of sulfur-containing biomolecules. Component of the suf operon, which is activated and required under specific conditions such as oxidative stress and iron limitation. Acts as a potent selenocysteine lyase in vitro, that mobilizes selenium from L-selenocysteine. Selenocysteine lyase activity is however unsure in vivo. The protein is Cysteine desulfurase of Salmonella heidelberg (strain SL476).